We begin with the raw amino-acid sequence, 262 residues long: T-cell surface glycoprotein YE1/48 (262 aa).

Residues 1–44 (MSEQEVTYSMVRFHKSAGLQKQVRPEETKGPREAGYRRCSFHWK) are Cytoplasmic-facing. The helical; Signal-anchor for type II membrane protein transmembrane segment at 45 to 66 (FIVIALGIFCFLLLVAVSVLAI) threads the bilayer. Residues 67-262 (KIFQYDQQKN…CGKRLDKFPH (196 aa)) are Extracellular-facing. 3 N-linked (GlcNAc...) asparagine glycosylation sites follow: Asn-86, Asn-103, and Asn-123. The Cell attachment site signature appears at 137 to 139 (RGD). A C-type lectin domain is found at 138–257 (GDKVYWFCYG…VFICICGKRL (120 aa)). 4 disulfide bridges follow: Cys-145–Cys-150, Cys-163–Cys-251, Cys-167–Cys-253, and Cys-232–Cys-245.

Homodimer; disulfide-linked. High, in T-lymphoma lines, very low in normal lymphocytes.

It localises to the membrane. Functionally, receptor on natural killer (NK) cells for H-2d alleles. Inhibits the activity of NK cells thus preventing cell lysis. This Mus musculus (Mouse) protein is T-cell surface glycoprotein YE1/48 (Klra1).